The primary structure comprises 297 residues: Protein BCCIP homolog (297 aa).

Residues 1–40 (MSANKQKKLSTMEVDPNEDVSSSSEDDDDDEPHPDAYKGN) are disordered.

It belongs to the BCP1 family.

The chain is Protein BCCIP homolog from Drosophila melanogaster (Fruit fly).